The sequence spans 226 residues: Uridylate kinase (226 aa).

6-10 (KISGK) is a binding site for ATP. Gly43 is a UMP binding site. The ATP site is built by Gly44 and Arg48. Residues Asp65 and 113 to 119 (FQPGQST) contribute to the UMP site. 4 residues coordinate ATP: Thr139, Asn140, Tyr145, and Asp148.

The protein belongs to the UMP kinase family. As to quaternary structure, homohexamer.

It localises to the cytoplasm. It catalyses the reaction UMP + ATP = UDP + ADP. The protein operates within pyrimidine metabolism; CTP biosynthesis via de novo pathway; UDP from UMP (UMPK route): step 1/1. Its activity is regulated as follows. Inhibited by UTP. Functionally, catalyzes the reversible phosphorylation of UMP to UDP. This chain is Uridylate kinase, found in Saccharolobus islandicus (strain M.16.27) (Sulfolobus islandicus).